The sequence spans 458 residues: MTEDTIAALSTPPGEGGIAVIRVSGPDSQNKVKQIFRSSRTDGNFNNKKMYHGQIVSPETNRILDEVLVVFMNKPYTYTCEDVVEIHCHGGMVPVKEILQLLFSYGIRPAEPGEFTKRAFLNGRLDLTQAEGVMDLITSKTNNLKNVAINQLQGNLKQKIDRLRDDLVSVMANLEARIDFPDEDIDVEDYHELKHRIDNAKVDINNLIASYDKGKIIREGIKTVIVGRPNVGKSSLLNLLLGEERAIVTEIPGTTRDVLEEVINLKGIPLRIIDTAGIRESEDKVEQIGVKRTRDSMEQADIILVVIDSSQELSQEDKQILTMAQDKTSLLVLNKTDLHEKLDIDEIDKLVSQIPKVRISALKEEGLDKLEEHISELVFGGQVMQTEELVITKARHFHSLDKVKEALSSAEENIKAEMSEDLIAIDIKEAYDYLGEITGETASEELVDRIFNDFCIGK.

(6S)-5-formyl-5,6,7,8-tetrahydrofolate is bound by residues R22, E85, and R124. Residues 220 to 379 (GIKTVIVGRP…LEEHISELVF (160 aa)) enclose the TrmE-type G domain. N230 is a K(+) binding site. GTP is bound by residues 230 to 235 (NVGKSS), 249 to 255 (TEIPGTT), and 274 to 277 (DTAG). S234 contacts Mg(2+). Positions 249, 251, and 254 each coordinate K(+). T255 is a Mg(2+) binding site. K458 is a (6S)-5-formyl-5,6,7,8-tetrahydrofolate binding site.

It belongs to the TRAFAC class TrmE-Era-EngA-EngB-Septin-like GTPase superfamily. TrmE GTPase family. As to quaternary structure, homodimer. Heterotetramer of two MnmE and two MnmG subunits. The cofactor is K(+).

The protein localises to the cytoplasm. Its function is as follows. Exhibits a very high intrinsic GTPase hydrolysis rate. Involved in the addition of a carboxymethylaminomethyl (cmnm) group at the wobble position (U34) of certain tRNAs, forming tRNA-cmnm(5)s(2)U34. In Natranaerobius thermophilus (strain ATCC BAA-1301 / DSM 18059 / JW/NM-WN-LF), this protein is tRNA modification GTPase MnmE.